A 284-amino-acid polypeptide reads, in one-letter code: MVILDGKLVSKTRKQLVKQQIDIYLNKGYRKPKLAVILIGNDQASELYVSNKIKACNLVGIESMLLRFDENINSQTLSDQINQLNNDQLVDAILLQLPLPKHLNEQMFLQAITPLKDVDGFHYINQGKMLEGYDTIYPCTPIGIINLLKAYNVDVKSKDITIIGTSNIVGKPLAIMLSNMGATVSMCNKNTKSLKKYTKISDIVISATGKQFIITKDMIKKNAIVIDVGIIRDPITNKIVGDVDFENVKELCSYITPVPGGVGPMTVAMLLENTLQLYKKHIKE.

NADP(+)-binding positions include 164 to 166 and Ile230; that span reads GTS.

The protein belongs to the tetrahydrofolate dehydrogenase/cyclohydrolase family. As to quaternary structure, homodimer.

The enzyme catalyses (6R)-5,10-methylene-5,6,7,8-tetrahydrofolate + NADP(+) = (6R)-5,10-methenyltetrahydrofolate + NADPH. The catalysed reaction is (6R)-5,10-methenyltetrahydrofolate + H2O = (6R)-10-formyltetrahydrofolate + H(+). The protein operates within one-carbon metabolism; tetrahydrofolate interconversion. In terms of biological role, catalyzes the oxidation of 5,10-methylenetetrahydrofolate to 5,10-methenyltetrahydrofolate and then the hydrolysis of 5,10-methenyltetrahydrofolate to 10-formyltetrahydrofolate. The chain is Bifunctional protein FolD from Mycoplasma capricolum subsp. capricolum (strain California kid / ATCC 27343 / NCTC 10154).